We begin with the raw amino-acid sequence, 513 residues long: Activin receptor type-2A (513 aa).

Positions 1–19 are cleaved as a signal peptide; that stretch reads MGAAAKLAFAVFLISCSSG. Over 20 to 135 the chain is Extracellular; the sequence is AILGRSETQE…TSNPVTPKPP (116 aa). 5 disulfide bridges follow: C30–C60, C50–C78, C85–C104, C91–C103, and C105–C110. 2 N-linked (GlcNAc...) asparagine glycosylation sites follow: N43 and N66. A helical transmembrane segment spans residues 136–161; the sequence is YYNILLYSLVPLMLIAGIVICAFWVY. Topologically, residues 162–513 are cytoplasmic; the sequence is RHHKMAYPPV…VDFPPKESSL (352 aa). A Protein kinase domain is found at 192–485; it reads LQLLEVKARG…GERITQMQRL (294 aa). ATP-binding positions include 198-206 and K219; that span reads KARGRFGCV. The active-site Proton acceptor is D322.

This sequence belongs to the protein kinase superfamily. TKL Ser/Thr protein kinase family. TGFB receptor subfamily. In terms of assembly, part of a complex consisting of MAGI2/ARIP1, ACVR2A, ACVR1B and SMAD3. Interacts with MAGI2/ARIP1. Interacts with type I receptor ACVR1. Interacts with BMP7. Interacts with TSC22D1/TSC-22. Interacts with activin A/INHBA. The cofactor is Mg(2+). Requires Mn(2+) as cofactor.

It localises to the cell membrane. It catalyses the reaction L-threonyl-[receptor-protein] + ATP = O-phospho-L-threonyl-[receptor-protein] + ADP + H(+). The catalysed reaction is L-seryl-[receptor-protein] + ATP = O-phospho-L-seryl-[receptor-protein] + ADP + H(+). In terms of biological role, on ligand binding, forms a receptor complex consisting of two type II and two type I transmembrane serine/threonine kinases. Type II receptors phosphorylate and activate type I receptors which autophosphorylate, then bind and activate SMAD transcriptional regulators. Receptor for activin A, activin B and inhibin A. Mediates induction of adipogenesis by GDF6. This Homo sapiens (Human) protein is Activin receptor type-2A.